The primary structure comprises 156 residues: Endoribonuclease YbeY (156 aa).

H122, H126, and H132 together coordinate Zn(2+).

The protein belongs to the endoribonuclease YbeY family. It depends on Zn(2+) as a cofactor.

The protein resides in the cytoplasm. Functionally, single strand-specific metallo-endoribonuclease involved in late-stage 70S ribosome quality control and in maturation of the 3' terminus of the 16S rRNA. This is Endoribonuclease YbeY from Bacillus cereus (strain ATCC 10987 / NRS 248).